Here is a 194-residue protein sequence, read N- to C-terminus: MAEEKQNEELNEQEELNETEAETAEAEQTAAEADAPAEETQTEMLEKQLKELQERLEEKENKLLRVQADFENYKRRARLDLEAAEKYRSQRIISDLLPALDNFERALQIDPDNEQTKSLLQGMEMVHRQILEALKNEGVEQIPSVGEQFDPNMHQAVMQVEDEAYESNAVVEELQKGYKLKDRVIRPSMVKVNQ.

The tract at residues 1–44 (MAEEKQNEELNEQEELNETEAETAEAEQTAAEADAPAEETQTEM) is disordered. Residues 9-25 (ELNEQEELNETEAETAE) show a composition bias toward acidic residues.

Belongs to the GrpE family. Homodimer.

The protein localises to the cytoplasm. In terms of biological role, participates actively in the response to hyperosmotic and heat shock by preventing the aggregation of stress-denatured proteins, in association with DnaK and GrpE. It is the nucleotide exchange factor for DnaK and may function as a thermosensor. Unfolded proteins bind initially to DnaJ; upon interaction with the DnaJ-bound protein, DnaK hydrolyzes its bound ATP, resulting in the formation of a stable complex. GrpE releases ADP from DnaK; ATP binding to DnaK triggers the release of the substrate protein, thus completing the reaction cycle. Several rounds of ATP-dependent interactions between DnaJ, DnaK and GrpE are required for fully efficient folding. This is Protein GrpE from Bacillus licheniformis (strain ATCC 14580 / DSM 13 / JCM 2505 / CCUG 7422 / NBRC 12200 / NCIMB 9375 / NCTC 10341 / NRRL NRS-1264 / Gibson 46).